The chain runs to 322 residues: Glucokinase (322 aa).

10 to 15 (GDIGGT) is a binding site for ATP.

The protein belongs to the bacterial glucokinase family.

It is found in the cytoplasm. It carries out the reaction D-glucose + ATP = D-glucose 6-phosphate + ADP + H(+). This Hahella chejuensis (strain KCTC 2396) protein is Glucokinase.